Reading from the N-terminus, the 371-residue chain is UPF0284 protein tll2306 (371 aa).

The protein belongs to the UPF0284 family.

The chain is UPF0284 protein tll2306 from Thermosynechococcus vestitus (strain NIES-2133 / IAM M-273 / BP-1).